We begin with the raw amino-acid sequence, 345 residues long: GTPase Obg (345 aa).

Residues 1–159 form the Obg domain; that stretch reads MKFIDEAIIK…RTLRLELKLL (159 aa). Residues 127 to 148 are disordered; the sequence is NARFKSSTNRAPRKTTQGKPGE. The segment covering 130-144 has biased composition (polar residues); it reads FKSSTNRAPRKTTQG. The region spanning 160-334 is the OBG-type G domain; that stretch reads ADVGLLGLPN…LIHAVMQYLE (175 aa). GTP contacts are provided by residues 166–173, 191–195, 213–216, 284–287, and 315–317; these read GLPNAGKS, FTTLH, DIPG, NKTD, and SAL. Residues Ser173 and Thr193 each contribute to the Mg(2+) site.

Belongs to the TRAFAC class OBG-HflX-like GTPase superfamily. OBG GTPase family. Monomer. The cofactor is Mg(2+).

The protein localises to the cytoplasm. In terms of biological role, an essential GTPase which binds GTP, GDP and possibly (p)ppGpp with moderate affinity, with high nucleotide exchange rates and a fairly low GTP hydrolysis rate. Plays a role in control of the cell cycle, stress response, ribosome biogenesis and in those bacteria that undergo differentiation, in morphogenesis control. The sequence is that of GTPase Obg from Nitrosococcus oceani (strain ATCC 19707 / BCRC 17464 / JCM 30415 / NCIMB 11848 / C-107).